The primary structure comprises 176 residues: Large ribosomal subunit protein uL16 (176 aa).

It belongs to the universal ribosomal protein uL16 family.

This chain is Large ribosomal subunit protein uL16, found in Sulfolobus acidocaldarius (strain ATCC 33909 / DSM 639 / JCM 8929 / NBRC 15157 / NCIMB 11770).